Consider the following 362-residue polypeptide: sn-glycerol-3-phosphate import ATP-binding protein UgpC (362 aa).

The ABC transporter domain occupies 4–235; that stretch reads LSFRNVKKTY…PASTFVAGFI (232 aa). 37-44 contacts ATP; that stretch reads GPSGCGKS.

Belongs to the ABC transporter superfamily. sn-glycerol-3-phosphate importer (TC 3.A.1.1.3) family. As to quaternary structure, the complex is composed of two ATP-binding proteins (UgpC), two transmembrane proteins (UgpA and UgpE) and a solute-binding protein (UgpB).

It is found in the cell inner membrane. The enzyme catalyses sn-glycerol 3-phosphate(out) + ATP + H2O = sn-glycerol 3-phosphate(in) + ADP + phosphate + H(+). Functionally, part of the ABC transporter complex UgpBAEC involved in sn-glycerol-3-phosphate (G3P) import. Responsible for energy coupling to the transport system. The polypeptide is sn-glycerol-3-phosphate import ATP-binding protein UgpC (Bordetella parapertussis (strain 12822 / ATCC BAA-587 / NCTC 13253)).